The sequence spans 113 residues: UPF0342 protein SMU_782 (113 aa).

It belongs to the UPF0342 family.

The protein is UPF0342 protein SMU_782 of Streptococcus mutans serotype c (strain ATCC 700610 / UA159).